The primary structure comprises 306 residues: tRNA dimethylallyltransferase (306 aa).

ATP is bound at residue 12–19 (GPTGTKKS).

Belongs to the IPP transferase family. As to quaternary structure, monomer. It depends on Mg(2+) as a cofactor.

The enzyme catalyses adenosine(37) in tRNA + dimethylallyl diphosphate = N(6)-dimethylallyladenosine(37) in tRNA + diphosphate. Catalyzes the transfer of a dimethylallyl group onto the adenine at position 37 in tRNAs that read codons beginning with uridine, leading to the formation of N6-(dimethylallyl)adenosine (i(6)A). The polypeptide is tRNA dimethylallyltransferase (Mycoplasmoides gallisepticum (strain R(low / passage 15 / clone 2)) (Mycoplasma gallisepticum)).